We begin with the raw amino-acid sequence, 320 residues long: Cytochrome f (320 aa).

Positions 1–36 are cleaved as a signal peptide; sequence MKHTNSKQKLKDIINFCQAIFTLCIICLYQANISNS. Positions 37, 57, 60, and 61 each coordinate heme. Residues 286–305 traverse the membrane as a helical segment; that stretch reads LISFIFFSISVLISQLFFVL.

The protein belongs to the cytochrome f family. The 4 large subunits of the cytochrome b6-f complex are cytochrome b6, subunit IV (17 kDa polypeptide, petD), cytochrome f and the Rieske protein, while the 4 small subunits are PetG, PetL, PetM and PetN. The complex functions as a dimer. The cofactor is heme.

The protein resides in the plastid. It localises to the chloroplast thylakoid membrane. Component of the cytochrome b6-f complex, which mediates electron transfer between photosystem II (PSII) and photosystem I (PSI), cyclic electron flow around PSI, and state transitions. This is Cytochrome f (petA) from Cyanidium caldarium (Red alga).